Here is a 300-residue protein sequence, read N- to C-terminus: Probable low-salt glycan biosynthesis reductase Agl14 (300 aa).

NADH-binding positions include 10–12 (GLL), 46–47 (DI), and 70–72 (AYT). Residues 11 to 12 (LL), 46 to 47 (DI), 70 to 72 (AYT), Tyr-109, Tyr-135, and Lys-139 each bind NADPH. Tyr-135 and Lys-139 together coordinate NADH. Tyr-135 acts as the Proton donor/acceptor in catalysis.

It belongs to the dTDP-4-dehydrorhamnose reductase family.

Its pathway is protein modification; protein glycosylation. It functions in the pathway cell surface structure biogenesis; S-layer biogenesis. Functionally, reductase involved in N-glycan biosynthetic pathway that takes place under low-salt conditions (1.75 M instead of 3.4 M). Participates in the formation of the tetrasaccharide present at 'Asn-532' of S-layer glycoprotein Csg, consisting of a sulfated hexose, 2 hexoses and rhamnose. Involved in the addition of final rhamnose (sugar 4) of the tetrasaccharide on the dolichol phosphate carrier. This is Probable low-salt glycan biosynthesis reductase Agl14 (agl14) from Haloferax volcanii (strain ATCC 29605 / DSM 3757 / JCM 8879 / NBRC 14742 / NCIMB 2012 / VKM B-1768 / DS2) (Halobacterium volcanii).